Here is a 344-residue protein sequence, read N- to C-terminus: uncharacterized protein (344 aa).

Residues 1 to 28 form the signal peptide; it reads MNKKSLNIVATLGILLVLAFSGCVDQSA.

This sequence belongs to the bacterial solute-binding protein 1 family. WtpA subfamily.

This is an uncharacterized protein from Methanococcus maripaludis (strain C7 / ATCC BAA-1331).